The sequence spans 1205 residues: MGNLKSVGQEPGPPCGLGLGLGFGLCGKQGPASPAPEPSWAPAPATPQAPDHSPAPSSPTLTRPPEGPKFPRVKNWELGSITYDTLCAQSQQDGPCTPRRCLGSLVLPRKLQTRPSQGPPPAEQLLSQARDFINQYYSSIKRSGSQAHEERLQEVEAEVASTGTYHLRESELVFGAKQAWRNAPRCVGRIQWGKLQVFDARDCSSAQEMFTYICNHIKYATNRGNLRLSAITVFPQRTPGRGDFRIWNTQLVRYAGYRQQDGSVRGDPANVEITELCIQHGWSPGNGRFDVLPLLLQAPDEAPELFVLPPELVLEVPLEHPTLEWFAALGLRWYALPAVSNMLLEIGGLEFPAAPFSGWYMSTEIGTRNLCDPHRYNILEDVAVCMDLDTRTTSSMWKDKAAVEINLAVLHSFQPPKVTIVDHHAATVSFMKHLENEQKARGGCPADWAWIVPPISGSLTPVFHQEMVNYVLSPAFRYQPDPWKGSAAKGAGITRKKTFKEVANAVKISASLMGTLMAKRVKATILYASETGRAQSYAQQLGRLFRKAFDPRVLCMDEYDVVSLEHEALVLVVTSTFGNGDPPENGESFAAALMEMSGPYNSSPRPEQHRSYKIRFNSVSCSDPLVSSWRRKRKESSNTDSAGALGTLRFCVFGLGSRAYPHFCAFARAVDTRLEELGGERLGQLGQGGELRGQGEGFRGWGEGASRNAASCETFCVGEEAKAAAQDIFSPKRSWKRQRYRLSTQAEGLQLLPGLIHVHRRKMFQATVLSVENLQSSKSTRATILVRLDTAGQEGLQYQPGDHISPHPPPRSSHRPGQGGPRVAPFSERPLMPRTPPPGGPPPSWVRDPRLPPCTLRQALTFFLDITSPPSPRLLRLLSTLAEEPSEQQELETLSQDPRRYEEWKWFRCPTLLEVLEQFPSVALPAPLLLTQLPLLQPRYYSVSSAPSAHPGEVHLTVAVLALDTSRLCSPLHPAEVVKSGGVWGDKGGLTEGVLARAPSFRLPPDPYVPCILVGPGTGIAPFRGFWQERLHDIESKGLQRAAPTLVFGCRCSQLDHLYRDEVQDAQERGVFGRVLTAFSREPDSPKTYVQDILRTELAAEVHRVLCLERGHMFVCGDVTMATSVLQTVPRILATEGGMELDEAGDVIGVLRDQQRYHEDIFGLTLRTQEVTSRIRTQSFSLQERHLRGAVPWAFDPPGPDTPGP.

Disordered stretches follow at residues 1 to 20 (MGNLKSVGQEPGPPCGLGLG) and 26 to 73 (CGKQ…FPRV). A compositionally biased stretch (pro residues) spans 33 to 47 (SPAPEPSWAPAPATP). Zn(2+) contacts are provided by cysteine 96 and cysteine 101. Positions 100-489 (RCLGSLVLPR…PDPWKGSAAK (390 aa)) are interaction with NOSIP. Serine 104 is a (6R)-L-erythro-5,6,7,8-tetrahydrobiopterin binding site. At serine 116 the chain carries Phosphoserine. Cysteine 186 is a binding site for heme b. L-arginine is bound by residues glutamine 250, tryptophan 359, tyrosine 360, and glutamate 364. Position 368 (arginine 368) interacts with (6R)-L-erythro-5,6,7,8-tetrahydrobiopterin. Residue asparagine 369 coordinates L-arginine. The (6R)-L-erythro-5,6,7,8-tetrahydrobiopterin site is built by alanine 449, tryptophan 450, and phenylalanine 463. Residue tyrosine 478 coordinates heme b. Residue threonine 498 is modified to Phosphothreonine. FMN contacts are provided by serine 529, glutamate 530, threonine 531, arginine 533, serine 575, and threonine 576. 3 positions are modified to phosphoserine: serine 618, serine 636, and serine 641. 4 residues coordinate FMN: serine 657, cysteine 664, glutamate 690, and glutamine 694. Arginine 781 is a binding site for NADP(+). A disordered region spans residues 796-850 (LQYQPGDHISPHPPPRSSHRPGQGGPRVAPFSERPLMPRTPPPGGPPPSWVRDPR). Histidine 803 is a binding site for FAD. Positions 833 to 844 (PRTPPPGGPPPS) are enriched in pro residues. 5 residues coordinate FAD: arginine 939, tyrosine 941, serine 942, threonine 957, and alanine 959. 7 residues coordinate NADP(+): threonine 1018, arginine 1051, serine 1080, arginine 1081, lysine 1087, tyrosine 1089, and glutamine 1091. Threonine 1177 bears the Phosphothreonine mark. Residues serine 1179 and serine 1181 each carry the phosphoserine modification.

This sequence belongs to the NOS family. In terms of assembly, homodimer. Interacts with NOSIP and NOSTRIN. Interacts with HSP90AB1. Forms a complex with ASL, ASS1 and SLC7A1; the complex regulates cell-autonomous L-arginine synthesis and citrulline recycling while channeling extracellular L-arginine to nitric oxide synthesis pathway. It depends on heme b as a cofactor. FAD serves as cofactor. FMN is required as a cofactor. Requires (6R)-L-erythro-5,6,7,8-tetrahydrobiopterin as cofactor.

The protein resides in the membrane. It localises to the caveola. It is found in the cytoplasm. The protein localises to the cytoskeleton. Its subcellular location is the golgi apparatus. The protein resides in the cell membrane. It carries out the reaction 2 L-arginine + 3 NADPH + 4 O2 + H(+) = 2 L-citrulline + 2 nitric oxide + 3 NADP(+) + 4 H2O. With respect to regulation, stimulated by calcium/calmodulin. Inhibited by NOSIP and NOSTRIN. Produces nitric oxide (NO) which is implicated in vascular smooth muscle relaxation through a cGMP-mediated signal transduction pathway. NO mediates vascular endothelial growth factor (VEGF)-induced angiogenesis in coronary vessels and promotes blood clotting through the activation of platelets. The sequence is that of Nitric oxide synthase 3 (NOS3) from Ovis aries (Sheep).